A 111-amino-acid chain; its full sequence is uncharacterized protein (111 aa).

The next 2 helical transmembrane spans lie at 7–27 (ILNI…SMMI) and 53–73 (AFAM…TFLH).

Its subcellular location is the cell membrane. This is an uncharacterized protein from Bacillus anthracis.